A 139-amino-acid polypeptide reads, in one-letter code: MRIMGLDVGSKTVGVAISDPLGFTAQGLEIIKINEDKQDFGFDRLAELVKQYQVDRFVIGLPKNMNNTSGPRVEASKAYGDRIEELFHIPVSYQDERLTTVEAERMLIEQADISRGKRKKVIDKLAAQLILQNYLDCNY.

The protein belongs to the YqgF nuclease family.

The protein localises to the cytoplasm. Functionally, could be a nuclease involved in processing of the 5'-end of pre-16S rRNA. This Streptococcus equi subsp. zooepidemicus (strain H70) protein is Putative pre-16S rRNA nuclease.